The sequence spans 89 residues: Elongation factor 1-beta (89 aa).

Belongs to the EF-1-beta/EF-1-delta family.

Functionally, promotes the exchange of GDP for GTP in EF-1-alpha/GDP, thus allowing the regeneration of EF-1-alpha/GTP that could then be used to form the ternary complex EF-1-alpha/GTP/AAtRNA. The sequence is that of Elongation factor 1-beta from Methanosarcina acetivorans (strain ATCC 35395 / DSM 2834 / JCM 12185 / C2A).